The sequence spans 504 residues: Cytochrome P450 4A2 (504 aa).

The propeptide occupies 1–4 (MGFS). Glu-315 serves as a coordination point for heme. Position 434 is a phosphoserine (Ser-434). Cys-451 lines the heme pocket.

It belongs to the cytochrome P450 family. Heme serves as cofactor.

The protein localises to the endoplasmic reticulum membrane. Its subcellular location is the microsome membrane. It catalyses the reaction an omega-methyl-long-chain fatty acid + reduced [NADPH--hemoprotein reductase] + O2 = an omega-hydroxy-long-chain fatty acid + oxidized [NADPH--hemoprotein reductase] + H2O + H(+). The catalysed reaction is dodecanoate + reduced [NADPH--hemoprotein reductase] + O2 = (11R)-hydroxydodecanoate + oxidized [NADPH--hemoprotein reductase] + H2O + H(+). The enzyme catalyses dodecanoate + reduced [NADPH--hemoprotein reductase] + O2 = 12-hydroxydodecanoate + oxidized [NADPH--hemoprotein reductase] + H2O + H(+). It carries out the reaction tetradecanoate + reduced [NADPH--hemoprotein reductase] + O2 = 14-hydroxytetradecanoate + oxidized [NADPH--hemoprotein reductase] + H2O + H(+). It catalyses the reaction hexadecanoate + reduced [NADPH--hemoprotein reductase] + O2 = 16-hydroxyhexadecanoate + oxidized [NADPH--hemoprotein reductase] + H2O + H(+). It participates in lipid metabolism; fatty acid metabolism. A cytochrome P450 monooxygenase that catalyzes omega and omega-1 hydroxylation of saturated fatty acids. Exhibits preferential omega versus omega-1 regioselectivity and (R) versus (S) stereoselectivity for hydroxylation of lauric and myristic acids. Has low activity toward palmitic acid. Mechanistically, uses molecular oxygen inserting one oxygen atom into a substrate, and reducing the second into a water molecule, with two electrons provided by NADPH via cytochrome P450 reductase (CPR; NADPH-ferrihemoprotein reductase). The chain is Cytochrome P450 4A2 from Rattus norvegicus (Rat).